A 244-amino-acid polypeptide reads, in one-letter code: MKNNYTSLKSSIDEEGELKTDHEIDLEKGPLPEYDSEEESTLPPYSDHARLSNSPNTHRENNPSRSTDNSSPFLIKLLISFTPIYVLNVLAICYLKYNDAFFKNYGAAEWTLFGFWCLVCTLALIFLTYFYETWTKAVGKGIKHFLKKWENMPMAFSEVFLFNILVGSPRMNLRYIFGDRWGLKWSLAEHITFVVLSILVFIAETVKPGSIRVNLIRKMGYEAKQQVNEYTAVPLREMNPESEA.

The span at 1-10 (MKNNYTSLKS) shows a compositional bias: polar residues. Residues 1–68 (MKNNYTSLKS…RENNPSRSTD (68 aa)) are disordered. A compositionally biased stretch (basic and acidic residues) spans 17 to 30 (ELKTDHEIDLEKGP). The next 4 helical transmembrane spans lie at 73–93 (FLIK…LAIC), 110–130 (WTLF…LTYF), 149–169 (WENM…VGSP), and 183–203 (LKWS…VFIA).

This sequence belongs to the WTF family. As to quaternary structure, homomer. Interacts with other proteins that exhibit high sequence similarity.

It localises to the spore membrane. The protein localises to the vacuole membrane. In terms of biological role, acts as a suppressor component of the dual wtf meiotic drive system, and can suppress but not confer meiotic drive by compatible poisons. Wtf meiotic drive systems promote unequal transmission of alleles from the parental zygote to progeny spores by encoding a poison and an antidote from the same locus; the poison is trans-acting and forms toxic aggregates in all spores within an ascus, wherease the antidote is spore-specific and targets aggregates for degradation by the vacuole. Meiotic drive by wtf systems therefore lead to poisoning of all progeny that do not inherit the dual poison/antidote allele, or express a compatible antidote. The sequence is that of Meiotic drive suppressor wtf2 from Schizosaccharomyces kambucha (Fission yeast).